Here is a 544-residue protein sequence, read N- to C-terminus: Putative ligase Rv1013 (544 aa).

Lys-528 participates in a covalent cross-link: Isoglutamyl lysine isopeptide (Lys-Gln) (interchain with Q-Cter in protein Pup).

This sequence belongs to the ATP-dependent AMP-binding enzyme family. Post-translationally, pupylated at Lys-528 by the prokaryotic ubiquitin-like protein Pup, which probably leads to its degradation by the proteasome.

In Mycobacterium tuberculosis (strain ATCC 25618 / H37Rv), this protein is Putative ligase Rv1013 (pks16).